An 89-amino-acid polypeptide reads, in one-letter code: Small ribosomal subunit protein uS15 (89 aa).

This sequence belongs to the universal ribosomal protein uS15 family. In terms of assembly, part of the 30S ribosomal subunit. Forms a bridge to the 50S subunit in the 70S ribosome, contacting the 23S rRNA.

Functionally, one of the primary rRNA binding proteins, it binds directly to 16S rRNA where it helps nucleate assembly of the platform of the 30S subunit by binding and bridging several RNA helices of the 16S rRNA. Forms an intersubunit bridge (bridge B4) with the 23S rRNA of the 50S subunit in the ribosome. This Corynebacterium diphtheriae (strain ATCC 700971 / NCTC 13129 / Biotype gravis) protein is Small ribosomal subunit protein uS15.